Here is a 653-residue protein sequence, read N- to C-terminus: MIKITFPDGNFREYEAGITGWDIAGSISPRLQQDVLAAGVNGQVWDLHRQINEDAEVKLFKWDDAEGKHAFWHSSAHLMAEALEELYPGIKFGIGPAIENGFYYDVDPGEGISIKDADLPAIEKRMQDLAARKETIIRRDIAKADALRMFGDKDDQYKVELISELADGTITTYTQGGFTDLCRGPHLPNTGYIKAIKLLSVAGAYWRGDEKRKQLTRIYGISFPKKKMLDEYLELLEEAKKRDHRKIGKELELFAFSQNVGAGLPLWLPRGTQLRLRLEDFLKQIQKHFGYQQVITPHIGNKNLYITSGHYAKYGQDSFRPINTPQEGEEFMLKPMNCPHHCEIFKITPHSYRDLPIRLAEFGTVYRYEQSGELHGLTRVRGFTQDDAHLFCRPDQLKEEFCKVMDIIFIIFKALDFKNFEAQISLRDKVNREKYIGSEENWERAERAIIEACEEKGLPAVIEYGEAAFYGPKLDFMVKDALGRRWQLGTIQVDYNLPERFDLEYTGEDNKKHRPVMIHRAPFGSMERFVAVLIEHTAGKFPLWLTPDQVVVLPVSERFNEYAHRVAKELNQRDIRVQVDDRNEKVGRKIRDNELKRIPYMLIVGENESREEEVSVRKQGEGDMGIMKITTFAELIEKEVDDMISAWRKDYQN.

One can recognise a TGS domain in the interval 1 to 61 (MIKITFPDGN…NEDAEVKLFK (61 aa)). The tract at residues 243-542 (DHRKIGKELE…LIEHTAGKFP (300 aa)) is catalytic. 3 residues coordinate Zn(2+): Cys338, His389, and His519.

Belongs to the class-II aminoacyl-tRNA synthetase family. Homodimer. Requires Zn(2+) as cofactor.

It localises to the cytoplasm. It catalyses the reaction tRNA(Thr) + L-threonine + ATP = L-threonyl-tRNA(Thr) + AMP + diphosphate + H(+). Catalyzes the attachment of threonine to tRNA(Thr) in a two-step reaction: L-threonine is first activated by ATP to form Thr-AMP and then transferred to the acceptor end of tRNA(Thr). Also edits incorrectly charged L-seryl-tRNA(Thr). The chain is Threonine--tRNA ligase from Porphyromonas gingivalis (strain ATCC BAA-308 / W83).